The sequence spans 64 residues: Large ribosomal subunit protein bL32 (64 aa).

Residues 1–20 (MALPKYKTSRANTHSRRANW) form a disordered region.

Belongs to the bacterial ribosomal protein bL32 family.

The sequence is that of Large ribosomal subunit protein bL32 from Bifidobacterium adolescentis (strain ATCC 15703 / DSM 20083 / NCTC 11814 / E194a).